The following is a 110-amino-acid chain: UPF0339 protein YegP (110 aa).

Tandem repeats lie at residues 10-58 (SSDN…RYEK) and 61-109 (ASNG…VKDN).

This sequence belongs to the UPF0339 family. Duplicated subfamily.

The chain is UPF0339 protein YegP (yegP) from Escherichia coli O6:H1 (strain CFT073 / ATCC 700928 / UPEC).